Reading from the N-terminus, the 48-residue chain is Small, acid-soluble spore protein P (48 aa).

Residues 1–12 show a composition bias toward basic and acidic residues; it reads MTNKNDGKDMRK. A disordered region spans residues 1–48; that stretch reads MTNKNDGKDMRKNAPKGAQPGQPEPLSGSKKVKNRNHTRQKHNSSHDM. The segment covering 30–48 has biased composition (basic residues); the sequence is KKVKNRNHTRQKHNSSHDM.

The protein belongs to the SspP family.

The protein localises to the spore core. This chain is Small, acid-soluble spore protein P, found in Bacillus licheniformis (strain ATCC 14580 / DSM 13 / JCM 2505 / CCUG 7422 / NBRC 12200 / NCIMB 9375 / NCTC 10341 / NRRL NRS-1264 / Gibson 46).